Consider the following 679-residue polypeptide: ATP-dependent zinc metalloprotease FtsH (679 aa).

Over 1–6 the chain is Cytoplasmic; it reads MNRIFR. A helical transmembrane segment spans residues 7-27; sequence NTIFYLLIFLVIVGIVSVFNS. Residues 28–114 lie on the Extracellular side of the membrane; sequence DQTETENVSF…IEPADETSGW (87 aa). A helical transmembrane segment spans residues 115–135; the sequence is VQFFTGIIPFIIIFILFFFLL. Residues 136-679 lie on the Cytoplasmic side of the membrane; the sequence is SQAQGGGSRV…SFEDDTNKKE (544 aa). ATP is bound at residue 206–213; it reads GPPGTGKT. His-428 is a binding site for Zn(2+). Glu-429 is an active-site residue. Zn(2+) is bound by residues His-432 and Asp-504. Composition is skewed to basic and acidic residues over residues 621–642 and 658–679; these read LEKE…KEET and PIEK…NKKE. The interval 621-679 is disordered; the sequence is LEKEKASESDVKVNINSKKEETPQVEAEQPQEPNTDEPIEKDPSVEDNRSFEDDTNKKE.

The protein in the central section; belongs to the AAA ATPase family. It in the C-terminal section; belongs to the peptidase M41 family. As to quaternary structure, homohexamer. Zn(2+) is required as a cofactor.

The protein localises to the cell membrane. Its function is as follows. Acts as a processive, ATP-dependent zinc metallopeptidase for both cytoplasmic and membrane proteins. Plays a role in the quality control of integral membrane proteins. This is ATP-dependent zinc metalloprotease FtsH from Alkalihalophilus pseudofirmus (strain ATCC BAA-2126 / JCM 17055 / OF4) (Bacillus pseudofirmus).